The chain runs to 268 residues: MRLSRRAATASALLLTPALALFGASAAVSAPRIQATDYVALGDSYSSGVGAGSYDSSSGSCKRSTKSYPALWAASHTGTRFNFTACSGARTGDVLAKQLTPVNSGTDLVSITIGGNDAGFADTMTTCNLQGESACLARIAKARAYIQQTLPAQLDQVYDAIDSRAPAAQVVVLGYPRFYKLGGSCAVGLSEKSRAAINAAADDINAVTAKRAADHGFAFGDVNTTFAGHELCSGAPWLHSVTLPVENSYHPTANGQSKGYLPVLNSAT.

The signal sequence occupies residues Met-1–Gln-34. Ser-44 (nucleophile) is an active-site residue. Disulfide bonds link Cys-61/Cys-86, Cys-127/Cys-135, and Cys-185/Cys-232. The active site involves His-250.

In terms of assembly, monomer.

It localises to the secreted. The enzyme catalyses a triacylglycerol + H2O = a diacylglycerol + a fatty acid + H(+). It carries out the reaction hexadecanoyl-CoA + H2O = hexadecanoate + CoA + H(+). Its activity is regulated as follows. Inhibited by 3,4-dichloroisocoumarin and tetrahydrolipstatin in the absence of substrate, but by phenylmethylsulfonyl fluoride (PMSF) only in the presence of substrate. Several water-miscible solvents enhance the lipase hydrolytic activity in vitro. Tetrahydrofuran and N,N-dimethylformamide (both 50%) inactivate the enzyme with t1/2 of 5 minutes and t1/2 of 2 hours, respectively. In terms of biological role, catalyzes the hydrolysis of p-nitrophenyl esters, alpha- and beta-naphthyl esters, and triacylglycerols, with a preference for medium acyl chain length (C8-C12). Shows a much higher hydrolysis rate of glycerol esters of unsaturated C16 and C18 fatty acids than that of their saturated counterparts, and a preference for cis double bond. Is also able to hydrolyze several natural oils and Tween detergents. Also displays thioesterase and phospholipase activities, towards palmitoyl-coenzyme A and diheptanoyl glycerophosphocholine, respectively. Shows transesterification activity of racemic 1-phenyl ethanol with vinyl acetate in hexane, proceeding with partial (R)-enantioselectivity. The chain is Lipase from Streptomyces rimosus.